Consider the following 312-residue polypeptide: Ribosomal RNA small subunit methyltransferase H (312 aa).

Residues 32-34 (AGH), Asp52, Phe79, Asp100, and Gln107 contribute to the S-adenosyl-L-methionine site.

Belongs to the methyltransferase superfamily. RsmH family.

It is found in the cytoplasm. The catalysed reaction is cytidine(1402) in 16S rRNA + S-adenosyl-L-methionine = N(4)-methylcytidine(1402) in 16S rRNA + S-adenosyl-L-homocysteine + H(+). Its function is as follows. Specifically methylates the N4 position of cytidine in position 1402 (C1402) of 16S rRNA. The chain is Ribosomal RNA small subunit methyltransferase H from Listeria monocytogenes serotype 4b (strain CLIP80459).